We begin with the raw amino-acid sequence, 130 residues long: Large ribosomal subunit protein bL12 (130 aa).

The protein belongs to the bacterial ribosomal protein bL12 family. Homodimer. Part of the ribosomal stalk of the 50S ribosomal subunit. Forms a multimeric L10(L12)X complex, where L10 forms an elongated spine to which 2 to 4 L12 dimers bind in a sequential fashion. Binds GTP-bound translation factors.

Forms part of the ribosomal stalk which helps the ribosome interact with GTP-bound translation factors. Is thus essential for accurate translation. The chain is Large ribosomal subunit protein bL12 from Nostoc punctiforme (strain ATCC 29133 / PCC 73102).